A 469-amino-acid polypeptide reads, in one-letter code: Interstitial collagenase (469 aa).

The N-terminal stretch at 1 to 18 (MLSLPLLLLLLWGMGSHS) is a signal peptide. Positions 19–99 (FPTVPSETRE…PRCGVPDVAE (81 aa)) are cleaved as a propeptide — activation peptide. Positions 90 to 97 (PRCGVPDV) match the Cysteine switch motif. A Zn(2+)-binding site is contributed by C92. Ca(2+) contacts are provided by D124 and D158. Zn(2+)-binding residues include H168 and D170. Ca(2+) is bound by residues D175, G176, G178, and N180. H183 is a binding site for Zn(2+). R190, G192, and D194 together coordinate Ca(2+). Residue H196 coordinates Zn(2+). Ca(2+)-binding residues include D198, E199, and E201. Position 218 (H218) interacts with Zn(2+). The active site involves E219. H222 and H228 together coordinate Zn(2+). Position 274 is a phosphothreonine (T274). Hemopexin repeat units lie at residues 275–324 (PEVC…WPQL), 325–371 (PNGL…FGFP), 374–422 (VKNI…FPGI), and 423–466 (GDKV…WFNC). A disulfide bridge connects residues C278 and C466. Ca(2+)-binding residues include D285 and Q329. Position 360 is a phosphotyrosine; by PKDCC (Y360). Ca(2+)-binding residues include D378 and D427.

The protein belongs to the peptidase M10A family. The cofactor is Ca(2+). Requires Zn(2+) as cofactor. Tyrosine phosphorylated in platelets by PKDCC/VLK.

The protein localises to the secreted. It is found in the extracellular space. Its subcellular location is the extracellular matrix. It carries out the reaction Cleavage of the triple helix of collagen at about three-quarters of the length of the molecule from the N-terminus, at 775-Gly-|-Ile-776 in the alpha1(I) chain. Cleaves synthetic substrates and alpha-macroglobulins at bonds where P1' is a hydrophobic residue.. With respect to regulation, can be activated without removal of the activation peptide. Cleaves collagens of types I, II, and III at one site in the helical domain. Also cleaves collagens of types VII and X. In Equus caballus (Horse), this protein is Interstitial collagenase (MMP1).